A 368-amino-acid chain; its full sequence is Chorismate synthase (368 aa).

R46 is a binding site for NADP(+). Residues R123 to S125, N240 to A241, G285, K300 to T304, and R326 each bind FMN.

This sequence belongs to the chorismate synthase family. In terms of assembly, homotetramer. Requires FMNH2 as cofactor.

It catalyses the reaction 5-O-(1-carboxyvinyl)-3-phosphoshikimate = chorismate + phosphate. The protein operates within metabolic intermediate biosynthesis; chorismate biosynthesis; chorismate from D-erythrose 4-phosphate and phosphoenolpyruvate: step 7/7. In terms of biological role, catalyzes the anti-1,4-elimination of the C-3 phosphate and the C-6 proR hydrogen from 5-enolpyruvylshikimate-3-phosphate (EPSP) to yield chorismate, which is the branch point compound that serves as the starting substrate for the three terminal pathways of aromatic amino acid biosynthesis. This reaction introduces a second double bond into the aromatic ring system. The polypeptide is Chorismate synthase (Porphyromonas gingivalis (strain ATCC BAA-308 / W83)).